A 292-amino-acid chain; its full sequence is uncharacterized protein (292 aa).

Helical transmembrane passes span 17–37 (LFYT…FPAL), 135–155 (LIAV…IGQL), 166–186 (TTLW…YDIV), and 216–236 (FHGV…TALY). The interval 267 to 292 (EKSEDKKSIVTSRIEEENEDEISDYE) is disordered. The span at 282–292 (EENEDEISDYE) shows a compositional bias: acidic residues.

Its subcellular location is the membrane. This is an uncharacterized protein from Caenorhabditis elegans.